A 95-amino-acid chain; its full sequence is Integration host factor subunit beta (95 aa).

Residues 56 to 76 (RAPRTGRNPKTGTSVDLDGKY) are disordered.

Belongs to the bacterial histone-like protein family. Heterodimer of an alpha and a beta chain.

Its function is as follows. This protein is one of the two subunits of integration host factor, a specific DNA-binding protein that functions in genetic recombination as well as in transcriptional and translational control. The chain is Integration host factor subunit beta from Shewanella sediminis (strain HAW-EB3).